Reading from the N-terminus, the 605-residue chain is Insulin-like growth factor-binding protein complex acid labile subunit (605 aa).

The signal sequence occupies residues 1-27 (MALRKGGLALALLLLSWVALGPRSLEG). The region spanning 32–74 (TPGEAEGPACPAACVCSYDDDADELSVFCSSRNLTRLPDGVPG) is the LRRNT domain. 2 disulfide bridges follow: C41–C47 and C45–C60. N64, N85, and N96 each carry an N-linked (GlcNAc...) asparagine glycan. 19 LRR repeats span residues 75 to 96 (GTQALWLDGNNLSSVPPAAFQN), 99 to 120 (SLGFLNLQGGQLGSLEPQALLG), 123 to 144 (NLCHLHLERNQLRSLALGTFAH), 147 to 168 (ALASLGLSNNRLSRLEDGLFEG), 171 to 192 (SLWDLNLGWNSLAVLPDAAFRG), 195 to 216 (SLRELVLAGNRLAYLQPALFSG), 219 to 240 (ELRELDLSRNALRAIKANVFVQ), 243 to 264 (RLQKLYLDRNLIAAVAPGAFLG), 267 to 288 (ALRWLDLSHNRVAGLLEDTFPG), 291 to 312 (GLRVLRLSHNAIASLRPRTFKD), 315 to 336 (FLEELQLGHNRIRQLAERSFEG), 339 to 360 (QLEVLTLDHNQLQEVKAGAFLG), 363 to 384 (NVAVMNLSGNCLRNLPEQVFRG), 387 to 408 (KLHSLHLEGSCLGRIRPHTFTG), 411 to 432 (GLRRLFLKDNGLVGIEEQSLWG), 435 to 456 (ELLELDLTSNQLTHLPHRLFQG), 459 to 480 (KLEYLLLSRNRLAELPADALGP), 483 to 504 (RAFWLDVSHNRLEALPNSLLAP), and 507 to 528 (RLRYLSLRNNSLRTFTPQPPGL). N-linked (GlcNAc...) asparagine glycosylation occurs at N368. An N-linked (GlcNAc...) asparagine glycan is attached at N515. The region spanning 536–605 (NPWDCGCPLK…DLSEAHFAPC (70 aa)) is the LRRCT domain. Disulfide bonds link C540/C583, C542/C605, and C566/C571. An N-linked (GlcNAc...) asparagine glycan is attached at N580.

Forms a ternary complex with IGF1 and IGFBP3. As to expression, plasma.

The protein localises to the secreted. It localises to the extracellular space. In terms of biological role, involved in protein-protein interactions that result in protein complexes, receptor-ligand binding or cell adhesion. This chain is Insulin-like growth factor-binding protein complex acid labile subunit (IGFALS), found in Homo sapiens (Human).